Here is a 552-residue protein sequence, read N- to C-terminus: Glutamine--tRNA ligase (552 aa).

The short motif at 34 to 44 (PEPNGYLHIGH) is the 'HIGH' region element. Residues 35–37 (EPN) and 41–47 (HIGHAKS) contribute to the ATP site. L-glutamine contacts are provided by Asp67 and Tyr212. Residues Thr231, 261-262 (RL), and 269-271 (MSK) contribute to the ATP site. A 'KMSKS' region motif is present at residues 268–272 (LMSKR).

This sequence belongs to the class-I aminoacyl-tRNA synthetase family. As to quaternary structure, monomer.

It localises to the cytoplasm. It catalyses the reaction tRNA(Gln) + L-glutamine + ATP = L-glutaminyl-tRNA(Gln) + AMP + diphosphate. In Hamiltonella defensa subsp. Acyrthosiphon pisum (strain 5AT), this protein is Glutamine--tRNA ligase.